We begin with the raw amino-acid sequence, 40 residues long: MSKDLLKYLSTAPVLLTAWMSLTAGMIIEIQRFFPDSLSF.

The chain crosses the membrane as a helical span at residues 12 to 34; it reads APVLLTAWMSLTAGMIIEIQRFF.

It belongs to the PsaJ family.

The protein resides in the plastid. Its subcellular location is the chloroplast thylakoid membrane. Its function is as follows. May help in the organization of the PsaE and PsaF subunits. The protein is Photosystem I reaction center subunit IX of Emiliania huxleyi (Coccolithophore).